The chain runs to 396 residues: Imidazolonepropionase (396 aa).

H69 and H71 together coordinate Fe(3+). The Zn(2+) site is built by H69 and H71. 3 residues coordinate 4-imidazolone-5-propanoate: R78, Y136, and H163. Y136 contacts N-formimidoyl-L-glutamate. Residue H224 coordinates Fe(3+). H224 contributes to the Zn(2+) binding site. Q227 provides a ligand contact to 4-imidazolone-5-propanoate. D298 is a binding site for Fe(3+). D298 provides a ligand contact to Zn(2+). N-formimidoyl-L-glutamate is bound by residues N300 and G302. T303 contacts 4-imidazolone-5-propanoate.

This sequence belongs to the metallo-dependent hydrolases superfamily. HutI family. Zn(2+) serves as cofactor. Requires Fe(3+) as cofactor.

Its subcellular location is the cytoplasm. The catalysed reaction is 4-imidazolone-5-propanoate + H2O = N-formimidoyl-L-glutamate. The protein operates within amino-acid degradation; L-histidine degradation into L-glutamate; N-formimidoyl-L-glutamate from L-histidine: step 3/3. In terms of biological role, catalyzes the hydrolytic cleavage of the carbon-nitrogen bond in imidazolone-5-propanoate to yield N-formimidoyl-L-glutamate. It is the third step in the universal histidine degradation pathway. This chain is Imidazolonepropionase, found in Cutibacterium acnes (strain DSM 16379 / KPA171202) (Propionibacterium acnes).